We begin with the raw amino-acid sequence, 450 residues long: Cysteine protease ATG4C (450 aa).

C112 acts as the Nucleophile in catalysis. Catalysis depends on residues D336 and H338.

This sequence belongs to the peptidase C54 family.

The protein localises to the cytoplasm. The enzyme catalyses [protein]-C-terminal L-amino acid-glycyl-phosphatidylethanolamide + H2O = [protein]-C-terminal L-amino acid-glycine + a 1,2-diacyl-sn-glycero-3-phosphoethanolamine. In terms of biological role, cysteine protease that plays a key role in autophagy by mediating both proteolytic activation and delipidation of ATG8 family proteins. The protease activity is required for proteolytic activation of ATG8 family proteins: cleaves the C-terminal amino acid of ATG8 proteins to reveal a C-terminal glycine. Exposure of the glycine at the C-terminus is essential for ATG8 proteins conjugation to phosphatidylethanolamine (PE) and insertion to membranes, which is necessary for autophagy. In addition to the protease activity, also mediates delipidation of ATG8 family proteins. Catalyzes delipidation of PE-conjugated forms of ATG8 proteins during macroautophagy. This Xenopus laevis (African clawed frog) protein is Cysteine protease ATG4C.